Reading from the N-terminus, the 360-residue chain is Phosphoserine aminotransferase (360 aa).

L-glutamate is bound at residue arginine 42. Pyridoxal 5'-phosphate is bound by residues 76-77 (AR), tryptophan 102, threonine 153, aspartate 172, and glutamine 195. At lysine 196 the chain carries N6-(pyridoxal phosphate)lysine. A pyridoxal 5'-phosphate-binding site is contributed by 237 to 238 (NT).

It belongs to the class-V pyridoxal-phosphate-dependent aminotransferase family. SerC subfamily. In terms of assembly, homodimer. Pyridoxal 5'-phosphate is required as a cofactor.

The protein localises to the cytoplasm. The enzyme catalyses O-phospho-L-serine + 2-oxoglutarate = 3-phosphooxypyruvate + L-glutamate. The catalysed reaction is 4-(phosphooxy)-L-threonine + 2-oxoglutarate = (R)-3-hydroxy-2-oxo-4-phosphooxybutanoate + L-glutamate. Its pathway is amino-acid biosynthesis; L-serine biosynthesis; L-serine from 3-phospho-D-glycerate: step 2/3. It functions in the pathway cofactor biosynthesis; pyridoxine 5'-phosphate biosynthesis; pyridoxine 5'-phosphate from D-erythrose 4-phosphate: step 3/5. In terms of biological role, catalyzes the reversible conversion of 3-phosphohydroxypyruvate to phosphoserine and of 3-hydroxy-2-oxo-4-phosphonooxybutanoate to phosphohydroxythreonine. The chain is Phosphoserine aminotransferase from Photobacterium profundum (strain SS9).